Reading from the N-terminus, the 303-residue chain is MDPEVTLLLQCPGGGLPQEQIQAELSPAHDRRPLPGGDEAITAIWETRLKAQPWLFDAPKFRLHSATLAPIGSRGPQLLLRLGLTSYRDFLGTNWSSSAAWLRQQGATDWGDTQAYLADPLGVGAALATADDFLVFLRRSRQVAEAPGLVDVPGGHPEPQALCPGGSPQHQDLAGQLVVHELFSSVLQEICDEVNLPLLTLSQPLLLGIARNETSAGRASAEFYVQCSLTSEQVRKHYLSGGPEAHESTGIFFVETQNVQRLLETEMWAELCPSAKGAIILYNRVQGSPTGAALGSPALLPPL.

Phe56, Tyr87, Arg139, Ala144, Asp151, His156, and Glu158 together coordinate substrate. The Nudix hydrolase domain maps to 118-285 (ADPLGVGAAL…KGAIILYNRV (168 aa)). The tract at residues 148 to 168 (GLVDVPGGHPEPQALCPGGSP) is disordered. The short motif at 175–196 (GQLVVHELFSSVLQEICDEVNL) is the Nudix box element. Mg(2+) is bound by residues Glu189 and Glu193. Ser274 lines the substrate pocket.

It belongs to the Nudix hydrolase family. The cofactor is Mg(2+).

It catalyses the reaction UDP-sugar + H2O = UMP + alpha-D-aldose 1-phosphate.. Its function is as follows. Hydrolyzes UDP-glucose to glucose 1-phosphate and UMP and UDP-galactose to galactose 1-phosphate and UMP. Preferred substrate is UDP-glucose. The polypeptide is Uridine diphosphate glucose pyrophosphatase NUDT22 (NUDT22) (Homo sapiens (Human)).